Consider the following 261-residue polypeptide: Indole-3-glycerol phosphate synthase (261 aa).

It belongs to the TrpC family.

It catalyses the reaction 1-(2-carboxyphenylamino)-1-deoxy-D-ribulose 5-phosphate + H(+) = (1S,2R)-1-C-(indol-3-yl)glycerol 3-phosphate + CO2 + H2O. It participates in amino-acid biosynthesis; L-tryptophan biosynthesis; L-tryptophan from chorismate: step 4/5. This chain is Indole-3-glycerol phosphate synthase, found in Burkholderia ambifaria (strain MC40-6).